Here is an 80-residue protein sequence, read N- to C-terminus: Exodeoxyribonuclease 7 small subunit (80 aa).

This sequence belongs to the XseB family. As to quaternary structure, heterooligomer composed of large and small subunits.

The protein localises to the cytoplasm. It carries out the reaction Exonucleolytic cleavage in either 5'- to 3'- or 3'- to 5'-direction to yield nucleoside 5'-phosphates.. Functionally, bidirectionally degrades single-stranded DNA into large acid-insoluble oligonucleotides, which are then degraded further into small acid-soluble oligonucleotides. The protein is Exodeoxyribonuclease 7 small subunit of Oleidesulfovibrio alaskensis (strain ATCC BAA-1058 / DSM 17464 / G20) (Desulfovibrio alaskensis).